Consider the following 1147-residue polypeptide: Multiple epidermal growth factor-like domains protein 10 (1147 aa).

An N-terminal signal peptide occupies residues 1-25 (MAISSSSCLGLICSLLCHWVGTASS). The segment at 1-857 (MAISSSSCLG…ALPADSYQIG (857 aa)) is necessary for interaction with AP2M1, self-assembly and formation of the irregular, mosaic-like adhesion pattern. The Extracellular segment spans residues 26–857 (LNLEDPNVCS…ALPADSYQIG (832 aa)). Positions 30–107 (DPNVCSHWES…FYESRDMCVP (78 aa)) constitute an EMI domain. Intrachain disulfides connect cysteine 34/cysteine 95, cysteine 60/cysteine 69, cysteine 94/cysteine 105, cysteine 109/cysteine 124, cysteine 126/cysteine 135, cysteine 148/cysteine 160, cysteine 154/cysteine 167, cysteine 169/cysteine 178, cysteine 191/cysteine 203, cysteine 197/cysteine 210, cysteine 212/cysteine 221, cysteine 234/cysteine 246, cysteine 240/cysteine 253, cysteine 255/cysteine 264, cysteine 281/cysteine 289, cysteine 283/cysteine 296, cysteine 298/cysteine 307, cysteine 320/cysteine 332, cysteine 326/cysteine 339, cysteine 341/cysteine 350, cysteine 409/cysteine 421, cysteine 415/cysteine 428, cysteine 430/cysteine 439, cysteine 456/cysteine 464, cysteine 458/cysteine 471, cysteine 473/cysteine 482, cysteine 495/cysteine 507, cysteine 501/cysteine 514, cysteine 516/cysteine 525, cysteine 542/cysteine 550, cysteine 544/cysteine 557, cysteine 559/cysteine 568, cysteine 581/cysteine 593, cysteine 587/cysteine 600, cysteine 602/cysteine 611, cysteine 669/cysteine 681, cysteine 675/cysteine 688, cysteine 690/cysteine 699, cysteine 716/cysteine 724, cysteine 718/cysteine 731, cysteine 733/cysteine 742, cysteine 755/cysteine 767, cysteine 761/cysteine 774, cysteine 776/cysteine 785, cysteine 802/cysteine 810, cysteine 804/cysteine 817, and cysteine 819/cysteine 828. 15 EGF-like domains span residues 101–136 (SRDM…TNCS), 144–179 (WGPH…WRCE), 187–222 (YGND…AFCE), 230–265 (HGPH…TVCG), 278–308 (SQEC…ERCQ), 316–351 (YGVR…ELCE), 405–440 (YGEA…TDCS), 453–483 (SSRC…VDCS), 491–526 (WGFG…AKCE), 539–569 (AERC…VHCD), 577–612 (WGPN…TTCQ), 665–700 (FGKN…SDCS), 713–743 (IHTC…LYCT), 751–786 (YGKD…RHCE), and 799–829 (RQIC…ARCD). An N-linked (GlcNAc...) asparagine glycan is attached at asparagine 134. The N-linked (GlcNAc...) asparagine glycan is linked to asparagine 496. The chain crosses the membrane as a helical span at residues 858–878 (AIAGIVVLVLVVLFLLALFII). The Cytoplasmic portion of the chain corresponds to 879-1147 (YRHKQKRKES…STSSSSSSSE (269 aa)). Positions 945-1147 (RDRMTIAKSK…STSSSSSSSE (203 aa)) are necessary for formation of large intracellular vacuoles. At tyrosine 1030 the chain carries Phosphotyrosine. Residues 1093 to 1147 (HVTQDPYDLPKNSHIPCHYDLLPVRDSSSSPKREDGGGSNSTSSNSTSSSSSSSE) form a disordered region. The segment covering 1132–1147 (NSTSSNSTSSSSSSSE) has biased composition (low complexity).

The protein belongs to the MEGF family. As to quaternary structure, homomer. Interacts with GULP1 and ABCA1. Interacts with AP2M1. Does not interact with MEGF11. Binds with high affinity to complement C1q. Interacts (via the cytoplasmic domain) with NOTCH1 (via NICD domain). In terms of processing, ubiquitinated; mono- and polyubiquitinated forms are detected. Phosphorylated on tyrosine residues. Phosphorylation at Tyr-1030 may be important for muscle cell proliferation. In terms of tissue distribution, expressed in cerebellum (at protein level). Expressed in kidney, stellate cells of the cerebellum and macrophage cell lines.

It localises to the cell membrane. The protein resides in the cell projection. It is found in the phagocytic cup. In terms of biological role, membrane receptor involved in phagocytosis by macrophages and astrocytes of apoptotic cells. Receptor for C1q, an eat-me signal, that binds phosphatidylserine expressed on the surface of apoptotic cells. Cooperates with ABCA1 within the process of engulfment. Promotes the formation of large intracellular vacuoles and may be responsible for the uptake of amyloid-beta peptides. Necessary for astrocyte-dependent apoptotic neuron clearance in the developing cerebellum. Plays a role in muscle cell proliferation, adhesion and motility. Is also an essential factor in the regulation of myogenesis. Controls the balance between skeletal muscle satellite cells proliferation and differentiation through regulation of the notch signaling pathway. May also function in the mosaic spacing of specific neuron subtypes in the retina through homotypic retinal neuron repulsion. Mosaics provide a mechanism to distribute each cell type evenly across the retina, ensuring that all parts of the visual field have access to a full set of processing elements. This Mus musculus (Mouse) protein is Multiple epidermal growth factor-like domains protein 10.